We begin with the raw amino-acid sequence, 269 residues long: Shikimate dehydrogenase (NADP(+)) (269 aa).

Shikimate-binding positions include 17–19 (SKS) and T64. Catalysis depends on K68, which acts as the Proton acceptor. E80 contacts NADP(+). Shikimate-binding residues include N89 and D105. Residues 130-134 (GAGGA), 154-159 (NRTRAK), and M213 contribute to the NADP(+) site. Residue Y215 coordinates shikimate. G237 contributes to the NADP(+) binding site.

Belongs to the shikimate dehydrogenase family. Homodimer.

It carries out the reaction shikimate + NADP(+) = 3-dehydroshikimate + NADPH + H(+). It functions in the pathway metabolic intermediate biosynthesis; chorismate biosynthesis; chorismate from D-erythrose 4-phosphate and phosphoenolpyruvate: step 4/7. Functionally, involved in the biosynthesis of the chorismate, which leads to the biosynthesis of aromatic amino acids. Catalyzes the reversible NADPH linked reduction of 3-dehydroshikimate (DHSA) to yield shikimate (SA). This chain is Shikimate dehydrogenase (NADP(+)), found in Neisseria meningitidis serogroup B (strain ATCC BAA-335 / MC58).